We begin with the raw amino-acid sequence, 137 residues long: Small ribosomal subunit protein uS12 (137 aa).

The interval M1 to A23 is disordered. D102 is modified (3-methylthioaspartic acid).

It belongs to the universal ribosomal protein uS12 family. In terms of assembly, part of the 30S ribosomal subunit. Contacts proteins S8 and S17. May interact with IF1 in the 30S initiation complex.

Its function is as follows. With S4 and S5 plays an important role in translational accuracy. Interacts with and stabilizes bases of the 16S rRNA that are involved in tRNA selection in the A site and with the mRNA backbone. Located at the interface of the 30S and 50S subunits, it traverses the body of the 30S subunit contacting proteins on the other side and probably holding the rRNA structure together. The combined cluster of proteins S8, S12 and S17 appears to hold together the shoulder and platform of the 30S subunit. The protein is Small ribosomal subunit protein uS12 of Leuconostoc citreum (strain KM20).